Here is a 57-residue protein sequence, read N- to C-terminus: Large ribosomal subunit protein bL32A (57 aa).

The interval 1–22 is disordered; sequence MAVPARRTSKTKKRLRRTHEKL. The span at 7–20 shows a compositional bias: basic residues; the sequence is RTSKTKKRLRRTHE.

It belongs to the bacterial ribosomal protein bL32 family.

This Enterococcus faecalis (strain ATCC 700802 / V583) protein is Large ribosomal subunit protein bL32A (rpmF1).